Consider the following 341-residue polypeptide: tRNA N6-adenosine threonylcarbamoyltransferase (341 aa).

Residues histidine 115 and histidine 119 each contribute to the Fe cation site. Substrate contacts are provided by residues 137–141 (IVSGG), aspartate 170, glycine 183, aspartate 187, and asparagine 276. Aspartate 304 contacts Fe cation.

The protein belongs to the KAE1 / TsaD family. The cofactor is Fe(2+).

It is found in the cytoplasm. The enzyme catalyses L-threonylcarbamoyladenylate + adenosine(37) in tRNA = N(6)-L-threonylcarbamoyladenosine(37) in tRNA + AMP + H(+). Its function is as follows. Required for the formation of a threonylcarbamoyl group on adenosine at position 37 (t(6)A37) in tRNAs that read codons beginning with adenine. Is involved in the transfer of the threonylcarbamoyl moiety of threonylcarbamoyl-AMP (TC-AMP) to the N6 group of A37, together with TsaE and TsaB. TsaD likely plays a direct catalytic role in this reaction. The protein is tRNA N6-adenosine threonylcarbamoyltransferase of Staphylococcus aureus (strain Mu3 / ATCC 700698).